Reading from the N-terminus, the 364-residue chain is Biotin synthase (364 aa).

The disordered stretch occupies residues 14 to 36; sequence DTIPPGTETPYASPSHARTEEAP. The Radical SAM core domain maps to 70–308; it reads RKGPLATTCG…QRDILVCGGR (239 aa). [4Fe-4S] cluster contacts are provided by cysteine 88, cysteine 92, and cysteine 95. [2Fe-2S] cluster-binding residues include cysteine 164 and cysteine 233.

It belongs to the radical SAM superfamily. Biotin synthase family. In terms of assembly, homodimer. It depends on [4Fe-4S] cluster as a cofactor. [2Fe-2S] cluster is required as a cofactor.

The enzyme catalyses (4R,5S)-dethiobiotin + (sulfur carrier)-SH + 2 reduced [2Fe-2S]-[ferredoxin] + 2 S-adenosyl-L-methionine = (sulfur carrier)-H + biotin + 2 5'-deoxyadenosine + 2 L-methionine + 2 oxidized [2Fe-2S]-[ferredoxin]. The protein operates within cofactor biosynthesis; biotin biosynthesis; biotin from 7,8-diaminononanoate: step 2/2. Catalyzes the conversion of dethiobiotin (DTB) to biotin by the insertion of a sulfur atom into dethiobiotin via a radical-based mechanism. The chain is Biotin synthase from Nitratidesulfovibrio vulgaris (strain DSM 19637 / Miyazaki F) (Desulfovibrio vulgaris).